Consider the following 189-residue polypeptide: Large ribosomal subunit protein bL17 (189 aa).

The protein belongs to the bacterial ribosomal protein bL17 family. As to quaternary structure, part of the 50S ribosomal subunit. Contacts protein L32.

In Rhodococcus jostii (strain RHA1), this protein is Large ribosomal subunit protein bL17.